Consider the following 711-residue polypeptide: MKYLILAEKPSVARDIADALQINQKRNGYFENNQYIVTWALGHLVTNATPEQYDKNLKEWRLEDLPIIPKYMKTVVIGKTSKQFKTVKALILDNKVKDIIIATDAGREGELVARLILDKVGNKKPLRRLWISSVTKKAIQQSFKNLKDGRQYNDLYYAALARSEADWIVGINATRALTTKYDAQLSLGRVQTPTIQLVNTRQQEINQFKPQQYYTLSLTVKGFDFQLESNQRYTNKETLEQIVNNLKNVDGKIKSVATKHKKSYPQSLYNLTDLQQDMYRRYKIGPKETLNTLQSLYERHKVVTYPRTDSNYLTTDMVDTMKERIQATMATTYKDQARPLISKTFSSKMSIFNNQKVSDHHAIIPTEVRPVMSDLSNRELKLYDMIVERFLEALMPPHEYDAITVTLEVAGHTFVLKENVTTVLGFKSIRQGESITEMQQPFSEGDEVKISKTNIREHETTPPEYFNEGSLLKAMENPQNFIQLKDKKYAQTLKQTGGIGTVATRADIIDKLFNMNAIESRDGKIKVTSKGKQILELAPEELTSPLLTAQWEEKLLLIERGKYQAKTFINEMKGFTKDVVNGIKNSDRKYKHDNLTTTECPTCGKFMIKVKTKNGQMLVCQDPSCKTKKNVQRKTNARCPNCKKKLTLFGKGKEAVYRCVCGHSETQAHMDQRMKSKSSGKVSRKEMKKYMNKNEGLDNNPFKDALKNLNL.

The Toprim domain occupies 2–135 (KYLILAEKPS…LRRLWISSVT (134 aa)). Positions 8 and 104 each coordinate Mg(2+). One can recognise a Topo IA-type catalytic domain in the interval 152–580 (YNDLYYAALA…EMKGFTKDVV (429 aa)). The interaction with DNA stretch occupies residues 186-191 (SLGRVQ). Tyrosine 305 serves as the catalytic O-(5'-phospho-DNA)-tyrosine intermediate. The interval 691-711 (MNKNEGLDNNPFKDALKNLNL) is disordered.

The protein belongs to the type IA topoisomerase family. The cofactor is Mg(2+).

The catalysed reaction is ATP-independent breakage of single-stranded DNA, followed by passage and rejoining.. Releases the supercoiling and torsional tension of DNA, which is introduced during the DNA replication and transcription, by transiently cleaving and rejoining one strand of the DNA duplex. Introduces a single-strand break via transesterification at a target site in duplex DNA. The scissile phosphodiester is attacked by the catalytic tyrosine of the enzyme, resulting in the formation of a DNA-(5'-phosphotyrosyl)-enzyme intermediate and the expulsion of a 3'-OH DNA strand. The free DNA strand then undergoes passage around the unbroken strand, thus removing DNA supercoils. Finally, in the religation step, the DNA 3'-OH attacks the covalent intermediate to expel the active-site tyrosine and restore the DNA phosphodiester backbone. This Staphylococcus aureus (strain bovine RF122 / ET3-1) protein is Putative DNA topoisomerase 3.